We begin with the raw amino-acid sequence, 78 residues long: Translational regulator CsrA (78 aa).

The protein belongs to the CsrA/RsmA family. Homodimer; the beta-strands of each monomer intercalate to form a hydrophobic core, while the alpha-helices form wings that extend away from the core.

It is found in the cytoplasm. In terms of biological role, a translational regulator that binds mRNA to regulate translation initiation and/or mRNA stability. Usually binds in the 5'-UTR at or near the Shine-Dalgarno sequence preventing ribosome-binding, thus repressing translation. Its main target seems to be the major flagellin gene, while its function is anatagonized by FliW. This is Translational regulator CsrA from Desulfotalea psychrophila (strain LSv54 / DSM 12343).